Consider the following 294-residue polypeptide: Early 4 ORF6 protein (294 aa).

A Nuclear localization signal motif is present at residues A239–E255.

This sequence belongs to the adenoviridae E4 30 to 34 kDa protein family. Interacts with E1B-55k.

The protein localises to the host nucleus. It localises to the host cytoplasm. Its function is as follows. Plays a major role to prevent cellular inhibition of viral genome replication by nuclear bodies. Assembles an SCF-like E3 ubiquitin ligase complex based on the cellular proteins ELOB, ELOC, CUL5 and RBX1, in cooperation with viral E1B-55K. This viral RING-type ligase ubiquitinates cellular substrates prior to proteasomal degradation: p53/TP53, LIG4, MRE11-RAD50-NBS1 (MRN) complex, ITGA3, DAXX and BLM. The protein is Early 4 ORF6 protein of Homo sapiens (Human).